The sequence spans 495 residues: NADH-ubiquinone oxidoreductase chain 4 (495 aa).

14 consecutive transmembrane segments (helical) span residues 9 to 29, 37 to 57, 89 to 109, 118 to 138, 139 to 159, 173 to 193, 214 to 234, 245 to 265, 272 to 292, 307 to 327, 335 to 355, 367 to 387, 413 to 433, and 457 to 477; these read YSNL…ILVI, IRGI…FFWI, ISLF…LVGF, EYMI…CSLD, LLIF…IIGV, FFLY…FIFF, ILLW…VPVH, PTAG…YGFL, FPEA…IAII, IIAY…FSLN, ILLM…VGAL, YGGL…FTLA, LVAT…LWLY, and VLIF…PEVF.

This sequence belongs to the complex I subunit 4 family.

It localises to the mitochondrion membrane. The catalysed reaction is a ubiquinone + NADH + 5 H(+)(in) = a ubiquinol + NAD(+) + 4 H(+)(out). Core subunit of the mitochondrial membrane respiratory chain NADH dehydrogenase (Complex I) that is believed to belong to the minimal assembly required for catalysis. Complex I functions in the transfer of electrons from NADH to the respiratory chain. The immediate electron acceptor for the enzyme is believed to be ubiquinone. This is NADH-ubiquinone oxidoreductase chain 4 (ND4) from Marchantia polymorpha (Common liverwort).